We begin with the raw amino-acid sequence, 251 residues long: Isoprenyl transferase (251 aa).

Aspartate 24 is a catalytic residue. Position 24 (aspartate 24) interacts with Mg(2+). Substrate contacts are provided by residues 25–28, tryptophan 29, arginine 37, histidine 41, and 69–71; these read GNGR and STE. Asparagine 72 functions as the Proton acceptor in the catalytic mechanism. Residues tryptophan 73, arginine 75, arginine 186, and 192-194 each bind substrate; that span reads RIS. A Mg(2+)-binding site is contributed by glutamate 205.

This sequence belongs to the UPP synthase family. As to quaternary structure, homodimer. The cofactor is Mg(2+).

Its function is as follows. Catalyzes the condensation of isopentenyl diphosphate (IPP) with allylic pyrophosphates generating different type of terpenoids. The polypeptide is Isoprenyl transferase (Chromobacterium violaceum (strain ATCC 12472 / DSM 30191 / JCM 1249 / CCUG 213 / NBRC 12614 / NCIMB 9131 / NCTC 9757 / MK)).